A 183-amino-acid chain; its full sequence is Large ribosomal subunit protein uL5 (183 aa).

Belongs to the universal ribosomal protein uL5 family. In terms of assembly, part of the 50S ribosomal subunit; part of the 5S rRNA/L5/L18/L25 subcomplex. Contacts the 5S rRNA and the P site tRNA. Forms a bridge to the 30S subunit in the 70S ribosome.

Its function is as follows. This is one of the proteins that bind and probably mediate the attachment of the 5S RNA into the large ribosomal subunit, where it forms part of the central protuberance. In the 70S ribosome it contacts protein S13 of the 30S subunit (bridge B1b), connecting the 2 subunits; this bridge is implicated in subunit movement. Contacts the P site tRNA; the 5S rRNA and some of its associated proteins might help stabilize positioning of ribosome-bound tRNAs. This is Large ribosomal subunit protein uL5 from Tropheryma whipplei (strain TW08/27) (Whipple's bacillus).